The primary structure comprises 583 residues: Probable cysteine--tRNA ligase, mitochondrial (583 aa).

Position 82 (Cys-82) interacts with Zn(2+). Gly-83 is a binding site for L-cysteine. Residues 84-94 (PTVYSSSHIGH) carry the 'HIGH' region motif. An L-cysteine-binding site is contributed by Thr-123. Positions 128–131 (KIIN) match the 'KIIK' region motif. 3 residues coordinate Zn(2+): Cys-271, His-296, and Glu-300. His-296 contacts L-cysteine. Residues 337 to 341 (KMSKS) carry the 'KMSKS' region motif. Position 340 (Lys-340) interacts with ATP.

It belongs to the class-I aminoacyl-tRNA synthetase family. Zn(2+) is required as a cofactor.

It localises to the mitochondrion. It carries out the reaction tRNA(Cys) + L-cysteine + ATP = L-cysteinyl-tRNA(Cys) + AMP + diphosphate. Its function is as follows. Mitochondrial cysteine-specific aminoacyl-tRNA synthetase that catalyzes the ATP-dependent ligation of cysteine to tRNA(Cys). Functionally, in addition to its role as an aminoacyl-tRNA synthetase, has also cysteine persulfide synthase activity. Produces reactive persulfide species such as cysteine persulfide (CysSSH) from substrate cysteine and mediate direct incorporation of CysSSH into proteins during translations, resulting in protein persulfides and polysulfides. CysSSHs behave as potent antioxidants and cellular protectants. The protein is Probable cysteine--tRNA ligase, mitochondrial (mcysS) of Dictyostelium discoideum (Social amoeba).